A 65-amino-acid polypeptide reads, in one-letter code: DNA gyrase inhibitor YacG (65 aa).

Zn(2+) is bound by residues Cys8, Cys11, Cys27, and Cys31. A disordered region spans residues 43–65 (SYRIPDTGKDSEKQENDPSGSEK). Over residues 48-65 (DTGKDSEKQENDPSGSEK) the composition is skewed to basic and acidic residues.

This sequence belongs to the DNA gyrase inhibitor YacG family. In terms of assembly, interacts with GyrB. Zn(2+) is required as a cofactor.

Its function is as follows. Inhibits all the catalytic activities of DNA gyrase by preventing its interaction with DNA. Acts by binding directly to the C-terminal domain of GyrB, which probably disrupts DNA binding by the gyrase. The protein is DNA gyrase inhibitor YacG of Nitrosospira multiformis (strain ATCC 25196 / NCIMB 11849 / C 71).